The chain runs to 232 residues: N-(5'-phosphoribosyl)anthranilate isomerase (232 aa).

Belongs to the TrpF family.

It catalyses the reaction N-(5-phospho-beta-D-ribosyl)anthranilate = 1-(2-carboxyphenylamino)-1-deoxy-D-ribulose 5-phosphate. Its pathway is amino-acid biosynthesis; L-tryptophan biosynthesis; L-tryptophan from chorismate: step 3/5. This is N-(5'-phosphoribosyl)anthranilate isomerase (TRP1) from Wickerhamomyces anomalus (Yeast).